The sequence spans 312 residues: Elongation factor Ts (312 aa).

The interval 84 to 87 (TDFV) is involved in Mg(2+) ion dislocation from EF-Tu.

It belongs to the EF-Ts family.

The protein localises to the cytoplasm. Associates with the EF-Tu.GDP complex and induces the exchange of GDP to GTP. It remains bound to the aminoacyl-tRNA.EF-Tu.GTP complex up to the GTP hydrolysis stage on the ribosome. In Caulobacter vibrioides (strain ATCC 19089 / CIP 103742 / CB 15) (Caulobacter crescentus), this protein is Elongation factor Ts.